Reading from the N-terminus, the 101-residue chain is MIPGEIDALPGDIDINAGLPTVTVEVTNTGDRPVQVGSHYHFFETNPALSFTRAQTRGFRLNIAAGTAVRFEPGQTRTVELVALGGERKVYGFRGDVMGDL.

This sequence belongs to the urease beta subunit family. As to quaternary structure, heterotrimer of UreA (gamma), UreB (beta) and UreC (alpha) subunits. Three heterotrimers associate to form the active enzyme.

The protein localises to the cytoplasm. It catalyses the reaction urea + 2 H2O + H(+) = hydrogencarbonate + 2 NH4(+). It participates in nitrogen metabolism; urea degradation; CO(2) and NH(3) from urea (urease route): step 1/1. The chain is Urease subunit beta from Hahella chejuensis (strain KCTC 2396).